A 505-amino-acid polypeptide reads, in one-letter code: Glutamate--tRNA ligase (505 aa).

Residues P12–G22 carry the 'HIGH' region motif. The 'KMSKS' region motif lies at K260–R264. K263 contributes to the ATP binding site.

Belongs to the class-I aminoacyl-tRNA synthetase family. Glutamate--tRNA ligase type 1 subfamily. Monomer.

Its subcellular location is the cytoplasm. The enzyme catalyses tRNA(Glu) + L-glutamate + ATP = L-glutamyl-tRNA(Glu) + AMP + diphosphate. Catalyzes the attachment of glutamate to tRNA(Glu) in a two-step reaction: glutamate is first activated by ATP to form Glu-AMP and then transferred to the acceptor end of tRNA(Glu). The protein is Glutamate--tRNA ligase of Bacteroides fragilis (strain ATCC 25285 / DSM 2151 / CCUG 4856 / JCM 11019 / LMG 10263 / NCTC 9343 / Onslow / VPI 2553 / EN-2).